The primary structure comprises 484 residues: Calcium-dependent protein kinase 26 (484 aa).

Positions 24-282 constitute a Protein kinase domain; it reads YSLGHKLGQG…AHQVLRHPWI (259 aa). ATP-binding positions include 30–38 and Lys53; that span reads LGQGQFGTT. Asp148 functions as the Proton acceptor in the catalytic mechanism. Ser188 is modified (phosphoserine). Positions 288–318 are autoinhibitory domain; that stretch reads APDRALDPAVLSRLKQFSAMNKLKQMALRVI. EF-hand domains are found at residues 325-360, 361-396, 397-432, and 436-466; these read EEIA…YGST, LKDT…LNKL, EREE…QGMS, and LEDV…GIVG. Ca(2+) contacts are provided by Asp338, Asp340, Ser342, Glu349, Asp374, Asp376, Ser378, Thr380, Glu385, Asp410, Asp412, Ser414, Tyr416, Glu421, Asp444, Asp446, Asp448, Arg450, and Glu455.

This sequence belongs to the protein kinase superfamily. Ser/Thr protein kinase family. CDPK subfamily.

It carries out the reaction L-seryl-[protein] + ATP = O-phospho-L-seryl-[protein] + ADP + H(+). It catalyses the reaction L-threonyl-[protein] + ATP = O-phospho-L-threonyl-[protein] + ADP + H(+). Activated by calcium. Autophosphorylation may play an important role in the regulation of the kinase activity. In terms of biological role, may play a role in signal transduction pathways that involve calcium as a second messenger. The protein is Calcium-dependent protein kinase 26 (CPK26) of Arabidopsis thaliana (Mouse-ear cress).